Reading from the N-terminus, the 636-residue chain is NADP-dependent malic enzyme, chloroplastic (636 aa).

The segment at 1-28 is disordered; that stretch reads MLSTRTAAVAASASPASPWKLGGRSEGG. Residues 1–62 constitute a chloroplast transit peptide; that stretch reads MLSTRTAAVA…LPPRRVDAVA (62 aa). Residues 7-18 are compositionally biased toward low complexity; the sequence is AAVAASASPASP. Y184 (proton donor) is an active-site residue. NAD(+) is bound at residue R237. Residue K255 is the Proton acceptor of the active site. Residues E327, D328, and D351 each coordinate a divalent metal cation. D351 is a binding site for NAD(+). 380–396 contacts NADP(+); that stretch reads LFLGAGEAGTGIAELIA. N492 contacts NAD(+).

Belongs to the malic enzymes family. Homotetramer. Mg(2+) is required as a cofactor. It depends on Mn(2+) as a cofactor.

The protein resides in the plastid. The protein localises to the chloroplast. It catalyses the reaction (S)-malate + NADP(+) = pyruvate + CO2 + NADPH. It carries out the reaction oxaloacetate + H(+) = pyruvate + CO2. The protein operates within photosynthesis; C4 acid pathway. The chloroplastic ME isoform decarboxylates malate shuttled from neighboring mesophyll cells. The CO(2) released is then refixed by ribulose-bisphosphate carboxylase. This pathway eliminates the photorespiratory loss of CO(2) that occurs in most plants. The polypeptide is NADP-dependent malic enzyme, chloroplastic (MOD1) (Zea mays (Maize)).